Consider the following 636-residue polypeptide: Nucleolin 2 (636 aa).

Disordered regions lie at residues 1–386, 458–481, and 544–636; these read MGKS…SKTL, ANER…SRTI, and SEIG…NDEE. Basic and acidic residues-rich tracts occupy residues 43-63 and 76-89; these read KELI…KKVE and EKTK…KDES. Acidic residues predominate over residues 90-103; it reads SSEEEDDSSSDEEI. A compositionally biased stretch (basic and acidic residues) spans 104–118; that stretch reads APAKKRPEPIKKAKV. 3 stretches are compositionally biased toward acidic residues: residues 122-133, 152-163, and 182-193; these read SSDDDSTSDEET and SSDDDSSSDEET. The span at 224–238 shows a compositional bias: basic and acidic residues; the sequence is TPAKKEPIVVKKDSS. Composition is skewed to acidic residues over residues 267 to 278, 299 to 311, and 331 to 341; these read SSEEESSSDDEP, SSEE…ESDD, and SSDESSDESDK. Positions 342–367 are enriched in basic and acidic residues; that stretch reads EESKDEKVTPKKKDSDVEMVDAEQKS. The span at 368–383 shows a compositional bias: polar residues; it reads NAKQPKTPTNQTQGGS. 2 consecutive RRM domains span residues 384-460 and 479-558; these read KTLF…LANE and RTIY…ESRP. The span at 464 to 481 shows a compositional bias: polar residues; the sequence is PRNSNPGRKGEGSQSRTI. Composition is skewed to basic and acidic residues over residues 552–566 and 579–604; these read HVEE…EGRS and RHSD…DRGA. Positions 622–636 are enriched in polar residues; it reads MESSKGTKTVFNDEE.

As to quaternary structure, interacts with THAL in the nucleus. As to expression, expressed at low levels in flower buds.

The protein resides in the nucleus. It is found in the nucleolus. Its function is as follows. Involved in pre-rRNA processing and ribosome assembly. In Arabidopsis thaliana (Mouse-ear cress), this protein is Nucleolin 2.